We begin with the raw amino-acid sequence, 423 residues long: Guanine nucleotide-binding protein subunit beta (423 aa).

7 WD repeats span residues 90–120, 132–162, 179–208, 220–256, 268–298, 348–377, and 389–419; these read GHNNKISDFRWSRDSKRILSASQDGFMLIWD, LDSQWVLSCAISPSSTLVASAGLNNNCTIYR, GHTCYISDIEFTDNAHILTASGDMTCALWD, DHLGDVLALAIPEEPNSENSSNTFASCGSDGYTYIWD, VNDSDINALRFFKDGMSIVAGSDNGAINMYD, DNQGVVSLDFSASGRLMYSCYTDIGCVVWD, and GHGGRVTGVRSSPDGLAVCTGSWDSTMKIWS.

This sequence belongs to the WD repeat G protein beta family. G proteins are composed of 3 units, alpha, beta and gamma. The beta-gamma subunit complex (STE4-STE18 complex) interacts with PLP1 and PLP2. Interacts with SYG1.

Its function is as follows. Implicated in the a- and alpha-factor response pathway. The beta and gamma chains of the putative yeast mating response pathway G protein play a positive role in initiation of the mating response. The beta and gamma chains are required for the GTPase activity, for replacement of GDP by GTP, and for G protein-effector interaction. The sequence is that of Guanine nucleotide-binding protein subunit beta (STE4) from Saccharomyces cerevisiae (strain ATCC 204508 / S288c) (Baker's yeast).